Here is a 125-residue protein sequence, read N- to C-terminus: Small ribosomal subunit protein uS11 (125 aa).

Residues Lys-101 to Lys-125 form a disordered region. The segment covering Pro-116–Lys-125 has biased composition (basic residues).

This sequence belongs to the universal ribosomal protein uS11 family. Part of the 30S ribosomal subunit. Interacts with proteins S7 and S18. Binds to IF-3.

Functionally, located on the platform of the 30S subunit, it bridges several disparate RNA helices of the 16S rRNA. Forms part of the Shine-Dalgarno cleft in the 70S ribosome. This is Small ribosomal subunit protein uS11 from Mycoplasma sp.